Here is a 371-residue protein sequence, read N- to C-terminus: MSL complex subunit 3B (371 aa).

Disordered regions lie at residues 1–44 (MATL…READ) and 160–229 (EERA…SPQA). Over residues 8–44 (PKDDGEGKDEGGSDRGDGDPKPKGKKEVEAHTRREAD) the composition is skewed to basic and acidic residues. Positions 44–367 (DERAVRIPIP…CEAHYSSKNP (324 aa)) constitute an MRG domain. Residues 206–216 (APRRSTRHSTH) show a composition bias toward basic residues.

It is found in the nucleus. Probable non-catalytic component of the MSL histone acetyltransferase complex, a multiprotein complex that mediates the majority of histone H4 acetylation at 'Lys-16' (H4K16ac), an epigenetic mark that prevents chromatin compaction. This chain is MSL complex subunit 3B, found in Rattus norvegicus (Rat).